The following is a 129-amino-acid chain: Venom CUB domain-containing protein 1 (129 aa).

The signal sequence occupies residues 1 to 18; it reads MKLLGVLITIYCIASTLA. A CUB domain is found at 19–121; sequence IDVNVPSNGM…KASCKAYSIT (103 aa). Residues cysteine 66 and cysteine 83 are joined by a disulfide bond.

It belongs to the venom CUB family. In terms of processing, contains 2 disulfide bonds. In terms of tissue distribution, expressed by the venom gland.

Its subcellular location is the secreted. The sequence is that of Venom CUB domain-containing protein 1 from Platymeris rhadamanthus (Red spot assassin bug).